We begin with the raw amino-acid sequence, 472 residues long: Exodeoxyribonuclease 7 large subunit (472 aa).

This sequence belongs to the XseA family. In terms of assembly, heterooligomer composed of large and small subunits.

The protein localises to the cytoplasm. It carries out the reaction Exonucleolytic cleavage in either 5'- to 3'- or 3'- to 5'-direction to yield nucleoside 5'-phosphates.. Functionally, bidirectionally degrades single-stranded DNA into large acid-insoluble oligonucleotides, which are then degraded further into small acid-soluble oligonucleotides. The polypeptide is Exodeoxyribonuclease 7 large subunit (Carboxydothermus hydrogenoformans (strain ATCC BAA-161 / DSM 6008 / Z-2901)).